A 160-amino-acid polypeptide reads, in one-letter code: MASTPNSVTLYTDGACSMNPGPGGYGAVILYGDGRREELSAGYKMTTNNRMEIMGAIAALSHLQEPSQVLLYTDSRYMVDAMSKGWAKKWKANGWQRNAKEKAKNPDLWETMLTLCEKHQVTFQWVKAHAGNKENERCDRLAVAAYQNNPNLVDEGFGKF.

Positions 4–147 constitute an RNase H type-1 domain; sequence TPNSVTLYTD…CDRLAVAAYQ (144 aa). Asp13, Glu52, Asp74, and Asp139 together coordinate Mg(2+).

It belongs to the RNase H family. Monomer. Mg(2+) is required as a cofactor.

Its subcellular location is the cytoplasm. The enzyme catalyses Endonucleolytic cleavage to 5'-phosphomonoester.. Endonuclease that specifically degrades the RNA of RNA-DNA hybrids. In Synechocystis sp. (strain ATCC 27184 / PCC 6803 / Kazusa), this protein is Ribonuclease HI (rnhA).